The chain runs to 323 residues: Cytochrome c biogenesis protein CcsA (323 aa).

Transmembrane regions (helical) follow at residues 18 to 38 (VSVV…VGLY), 43 to 63 (KGML…WVYW), 71 to 91 (LYES…IPSF), 99 to 119 (LNVI…SGLL), 146 to 166 (LGYA…IIIF), 227 to 247 (VISL…VWAN), 256 to 276 (WDPK…YLHI), and 288 to 308 (AIVA…VNLL).

Belongs to the CcmF/CycK/Ccl1/NrfE/CcsA family. As to quaternary structure, may interact with Ccs1.

It localises to the plastid. Its subcellular location is the chloroplast thylakoid membrane. Required during biogenesis of c-type cytochromes (cytochrome c6 and cytochrome f) at the step of heme attachment. In Spinacia oleracea (Spinach), this protein is Cytochrome c biogenesis protein CcsA.